Consider the following 378-residue polypeptide: Stimulator of interferon genes protein (378 aa).

Topologically, residues 1–17 (MPYSNLHPAIPRPRGHR) are cytoplasmic. The mediates interaction with ZDHHC1 and ZDHHC11 stretch occupies residues 1–189 (MPYSNLHPAI…MFNQLHNNML (189 aa)). A helical membrane pass occupies residues 18 to 34 (SKYVALIFLVASLMILW). Lysine 19 participates in a covalent cross-link: Glycyl lysine isopeptide (Lys-Gly) (interchain with G-Cter in ubiquitin). Residues 35 to 44 (VAKDPPNHTL) lie on the Lumenal side of the membrane. A helical transmembrane segment spans residues 45-69 (KYLALHLASHELGLLLKNLCCLAEE). The Cytoplasmic portion of the chain corresponds to 70 to 91 (LCHVQSRYQGSYWKAVRACLGC). Residues cysteine 88 and cysteine 91 are each lipidated (S-palmitoyl cysteine). Residues 92 to 106 (PIHCMAMILLSSYFY) traverse the membrane as a helical segment. Residues 107 to 115 (FLQNTADIY) lie on the Lumenal side of the membrane. A helical transmembrane segment spans residues 116-133 (LSWMFGLLVLYKSLSMLL). Residues 134 to 378 (GLQSLTPAEV…QPLPLRTDLI (245 aa)) lie on the Cytoplasmic side of the membrane. Lysine 150 participates in a covalent cross-link: Glycyl lysine isopeptide (Lys-Gly) (interchain with G-Cter in ubiquitin). Positions 152–339 (LNVAHGLAWS…RHIRQEEKEE (188 aa)) are cyclic dinucleotide-binding domain (CBD). Glycine 165 is a 3',3'-c-di-GMP binding site. Tyrosine 166 provides a ligand contact to 2',3'-cUAMP. Tyrosine 166 lines the 3',3'-cGAMP pocket. Residue lysine 235 forms a Glycyl lysine isopeptide (Lys-Gly) (interchain with G-Cter in ubiquitin) linkage. Residue arginine 237 participates in 2',3'-cUAMP binding. 3',3'-cGAMP is bound at residue arginine 237. A 2',3'-cGAMP-binding site is contributed by arginine 237. 3',3'-c-di-GMP-binding positions include 237-240 (RVYS) and threonine 262. At serine 240 the chain carries Phosphoserine. Threonine 262 contacts 2',3'-cUAMP. 2',3'-cGAMP is bound at residue threonine 262. Lysine 337 participates in a covalent cross-link: Glycyl lysine isopeptide (Lys-Gly) (interchain with G-Cter in SUMO). A C-terminal tail (CTT) region spans residues 339-378 (EVTMNAPMTSVAPPPSVLSQEPRLLISGMDQPLPLRTDLI). Residue serine 354 is modified to Phosphoserine; by MAP3K7. Phosphoserine; by TBK1 occurs at positions 357 and 365. Residues 362–365 (LLIS) carry the pLxIS motif motif.

This sequence belongs to the STING family. In terms of assembly, homodimer; forms a homodimer in absence of cyclic nucleotide (c-di-GMP or cGAMP); 'Lys-63'-linked ubiquitination at Lys-150 is required for homodimerization. Homotetramer; in presence of cyclic nucleotide (c-di-GMP or cGAMP), forms tetramers and higher-order oligomers through side-by-side packing. Interacts (when phosphorylated) with IRF3; following activation and phosphorylation on the pLxIS motif by TBK1, recruits IRF3. Interacts with RIGI, MAVS and SSR2. Interacts with RNF5 and TRIM56. Interacts with TBK1; when homodimer, leading to subsequent production of IFN-beta. Interacts with IFIT1 and IFIT2. Interacts with TRIM29; this interaction induces STING1 ubiquitination and subsequent degradation. Associates with the MHC-II complex. Interacts with STEEP1; interaction takes place upon cGAMP-activation and STING1 phosphorylation by MAP3K7/TAK1 and promotes STING1 translocation to COPII vesicles. Interacts with SEC24A, SEC24B and SEC24C; promoting translocation to COPII vesicles. Interacts (when ubiquitinated) with SQSTM1; leading to relocalization to autophagosomes. Interacts with SURF4. Interacts with HNRNPA2B1. Interacts with ZDHHC1; ZDHHC1 constitutively interacts with STING1 and in presence of DNA viruses activates it by promoting its cGAMP-induced oligomerization and the recruitment of downstream signaling components. Interacts with ZDHHC11; in presence of DNA viruses promotes the recruitment of IRF3 to STING1. Interacts with TOMM70. Interacts with IFI204. Interacts with TAB1; promoting recruitment of TAB1 to the endoplasmic reticulum membrane and subsequent activation of MAP3K7/TAK1. Interacts (via transmembrane domain) with TMEM203. Interacts with DDX41. Post-translationally, phosphorylation by TBK1 leads to activation and production of IFN-beta. Following cyclic nucleotide (c-di-GMP or cGAMP)-binding, activation and translocation from the endoplasmic reticulum, STING1 is phosphorylated by TBK1 at Ser-365 in the pLxIS motif. The phosphorylated pLxIS motif constitutes an IRF3-binding motif, leading to recruitment of the transcription factor IRF3 to induce type-I interferons and other cytokines. The phosphorylated pLxIS motif facilitates SENP2 recruitment during late phase of viral infection. Phosphorylated on tyrosine residues upon MHC-II aggregation. Dephosphorylation by PPP6C leads to inactivation and decreased production of IFN-beta. Phosphorylation at Ser-357 is also required to activate IRF3. Phosphorylation at Ser-354 by MAP3K7/TAK1 facilitates its interaction with STEEP1, promoting STING1 translocation to COPII vesicles. Ubiquitinated. Ubiquitinated via 'Lys-63'-linked ubiquitin chains in response to double-stranded DNA treatment, leading to relocalization to autophagosomes and subsequent degradation; this process is dependent on SQSTM1. 'Lys-63'-linked ubiquitination mediated by TRIM56 at Lys-150 promotes homodimerization and recruitment of the antiviral kinase TBK1 and subsequent production of IFN-beta. 'Lys-48'-linked polyubiquitination at Lys-150 occurring after viral infection is mediated by RNF5 and leads to proteasomal degradation. 'Lys-11'-linked polyubiquitination at Lys-150 by RNF26 leads to stabilize STING1: it protects STING1 from RNF5-mediated 'Lys-48'-linked polyubiquitination. 'Lys-33'-linked and 'Lys-48'-linked deubiquitinated by USP20; leading to its stabilization and promotion of innate antiviral response. 'Lys-48'-linked deubiquitinated by USP44; leading to its stabilization and promotion of innate antiviral response. Deubiquitinated by USP13; leading to inhibition of innate antiviral response. 'Lys-63'-linked deubiquitinated by USP49; leading to inhibition of the subsequent recruitment of TBK1 to the signaling complex. 'Lys-63'-linked ubiquitination mediated by RNF39 promotes the activation of the cGAS-STING pathway. MARCHF5-mediated ubiquitination prevents the oxidation-induced polymer formation. In terms of processing, sumoylated at Lys-337 by TRIM38 during the early phase of viral infection, promoting its stability by preventing its relocalization to autophagosomes and subsequent degradation. Desumoylated by SENP2 during the late phase of viral infection. Post-translationally, palmitoylation takes place in the Golgi apparatus and creates a platform for the recruitment of TBK1. In terms of tissue distribution, present in spleen and thymus tissue. Also present in dendritic cells (at protein level).

It localises to the endoplasmic reticulum membrane. The protein localises to the cytoplasm. Its subcellular location is the perinuclear region. It is found in the endoplasmic reticulum-Golgi intermediate compartment membrane. The protein resides in the golgi apparatus membrane. It localises to the cytoplasmic vesicle. The protein localises to the autophagosome membrane. Its subcellular location is the mitochondrion outer membrane. It is found in the cell membrane. The protein resides in the lysosome membrane. The enzyme catalyses H(+)(in) = H(+)(out). Activated by anticancer drug 5,6-dimethylxanthenone 4-acetic acid (DMXAA). Specifically inhibited by nitrofuran derivatives C-178 and C-176, which covalently bind Cys-91 and prevent palmitoylation and subsequent activation od STING1. In terms of biological role, facilitator of innate immune signaling that acts as a sensor of cytosolic DNA from bacteria and viruses and promotes the production of type I interferon (IFN-alpha and IFN-beta). Innate immune response is triggered in response to non-CpG double-stranded DNA from viruses and bacteria delivered to the cytoplasm. Acts by binding cyclic dinucleotides: recognizes and binds cyclic di-GMP (c-di-GMP), a second messenger produced by bacteria, cyclic UMP-AMP (2',3'-cUAMP), and cyclic GMP-AMP (cGAMP), a messenger produced by CGAS in response to DNA virus in the cytosol. Upon binding to c-di-GMP, cUAMP or cGAMP, STING1 oligomerizes, translocates from the endoplasmic reticulum and is phosphorylated by TBK1 on the pLxIS motif, leading to recruitment and subsequent activation of the transcription factor IRF3 to induce expression of type I interferon and exert a potent anti-viral state. Exhibits 2',3' phosphodiester linkage-specific ligand recognition: can bind both 2'-3' linked cGAMP (2'-3'-cGAMP) and 3'-3' linked cGAMP but is preferentially activated by 2'-3' linked cGAMP. The preference for 2'-3'-cGAMP, compared to other linkage isomers is probably due to the ligand itself, whichs adopts an organized free-ligand conformation that resembles the STING1-bound conformation and pays low energy costs in changing into the active conformation. In addition to promote the production of type I interferons, plays a direct role in autophagy. Following cGAMP-binding, STING1 buds from the endoplasmic reticulum into COPII vesicles, which then form the endoplasmic reticulum-Golgi intermediate compartment (ERGIC). The ERGIC serves as the membrane source for WIPI2 recruitment and LC3 lipidation, leading to formation of autophagosomes that target cytosolic DNA or DNA viruses for degradation by the lysosome. Promotes autophagy by acting as a proton channel that directs proton efflux from the Golgi to facilitate MAP1LC3B/LC3B lipidation. The autophagy- and interferon-inducing activities can be uncoupled and autophagy induction is independent of TBK1 phosphorylation. Autophagy is also triggered upon infection by bacteria: following c-di-GMP-binding, which is produced by live Gram-positive bacteria, promotes reticulophagy. May be involved in translocon function, the translocon possibly being able to influence the induction of type I interferons. May be involved in transduction of apoptotic signals via its association with the major histocompatibility complex class II (MHC-II). This Mus musculus (Mouse) protein is Stimulator of interferon genes protein.